The primary structure comprises 232 residues: uncharacterized protein (232 aa).

A helical transmembrane segment spans residues 209 to 229; the sequence is ATISTPALGYAYFLFTLTLVF.

It localises to the host membrane. This is an uncharacterized protein from Saccharolobus islandicus (Sulfolobus islandicus).